Here is a 357-residue protein sequence, read N- to C-terminus: Norreticuline-7-O-methyltransferase (357 aa).

D225 is an S-adenosyl-L-methionine binding site. H263 functions as the Proton acceptor in the catalytic mechanism.

It belongs to the class I-like SAM-binding methyltransferase superfamily. Cation-independent O-methyltransferase family. As to expression, expressed instems, leaves, roots and seedlings.

Involved in the biosynthesis of benzylisoquinoline alkaloids. Catalyzes specifically the methylation of norreticuline at position seven to produce norlaudanine. No activity with norcoclaurine, reticuline, norlaudanosoline, norisoorientaline, scoulerine, salutaridinol, oripavine, salsolinol, codeine or morphine. Involved in papaverine biosynthesis. The polypeptide is Norreticuline-7-O-methyltransferase (Papaver somniferum (Opium poppy)).